We begin with the raw amino-acid sequence, 159 residues long: Style cell-cycle inhibitor 1 (159 aa).

The disordered stretch occupies residues 1–86 (MVSERSSKEK…SDHKLKEGIP (86 aa)). The segment covering 15-50 (ARSEDSSSSDYEEKVKRHRGTEKDDERRSRRSDKKD) has biased composition (basic and acidic residues). Over residues 51–63 (KKSHKHHKSSTSK) the composition is skewed to basic residues. Over residues 64–85 (KSKDDKPKKKHTESDHKLKEGI) the composition is skewed to basic and acidic residues.

It is found in the nucleus. Component of the auxin signaling transduction pathway that regulates cell proliferation and differentiation during flowers stigmas and styles development. Involved in the regulation of auxin-related genes. The sequence is that of Style cell-cycle inhibitor 1 from Arabidopsis thaliana (Mouse-ear cress).